A 739-amino-acid chain; its full sequence is Cleavage and polyadenylation specificity factor subunit 2 (739 aa).

Positions 411-423 are enriched in basic and acidic residues; the sequence is VKEEETKASHGSD. Residues 411 to 430 are disordered; the sequence is VKEEETKASHGSDDNSSEPM.

It belongs to the metallo-beta-lactamase superfamily. RNA-metabolizing metallo-beta-lactamase-like family. CPSF2/YSH1 subfamily. As to quaternary structure, component of the CPSF complex, at least composed of CPSF160, CPSF100, CPSF73-I, CPSF73-II, CPSF30, FY and FIPS5. Forms a complex with cleavage and polyadenylation specificity factor (CPSF) subunits FY, PAPS2, CSTF50, CPSF30, CPSF73-I, CPSF73-II and CPSF160.

The protein localises to the nucleus. Its subcellular location is the cytoplasm. Functionally, CPSF plays a key role in pre-mRNA 3'-end formation, recognizing the AAUAAA signal sequence and interacting with poly(A)polymerase and other factors to bring about cleavage and poly(A) addition. Required for antisense-RNA-mediated gene silencing. This chain is Cleavage and polyadenylation specificity factor subunit 2 (CPSF100), found in Arabidopsis thaliana (Mouse-ear cress).